The following is a 110-amino-acid chain: U1-lycotoxin-Ls1aa (110 aa).

Positions 1 to 20 are cleaved as a signal peptide; sequence MKFVLLFGVLLVTLFSYSSA. Residues 21 to 44 constitute a propeptide that is removed on maturation; that stretch reads EMLDDFDQADEDELLSLIEKEEAR. 4 cysteine pairs are disulfide-bonded: cysteine 47-cysteine 62, cysteine 54-cysteine 71, cysteine 61-cysteine 89, and cysteine 73-cysteine 87.

This sequence belongs to the neurotoxin 19 (CSTX) family. 03 subfamily. As to expression, expressed by the venom gland.

It localises to the secreted. The sequence is that of U1-lycotoxin-Ls1aa from Lycosa singoriensis (Wolf spider).